The chain runs to 354 residues: S-adenosylmethionine:tRNA ribosyltransferase-isomerase (354 aa).

Belongs to the QueA family. As to quaternary structure, monomer.

It is found in the cytoplasm. It catalyses the reaction 7-aminomethyl-7-carbaguanosine(34) in tRNA + S-adenosyl-L-methionine = epoxyqueuosine(34) in tRNA + adenine + L-methionine + 2 H(+). Its pathway is tRNA modification; tRNA-queuosine biosynthesis. Transfers and isomerizes the ribose moiety from AdoMet to the 7-aminomethyl group of 7-deazaguanine (preQ1-tRNA) to give epoxyqueuosine (oQ-tRNA). The sequence is that of S-adenosylmethionine:tRNA ribosyltransferase-isomerase from Pseudomonas syringae pv. tomato (strain ATCC BAA-871 / DC3000).